A 122-amino-acid chain; its full sequence is Small ribosomal subunit protein uS13 (122 aa).

Residues 94–122 (KQLPVRGQRTHTNARTRKGKAKPIAGKKK) form a disordered region.

It belongs to the universal ribosomal protein uS13 family. As to quaternary structure, part of the 30S ribosomal subunit. Forms a loose heterodimer with protein S19. Forms two bridges to the 50S subunit in the 70S ribosome.

Its function is as follows. Located at the top of the head of the 30S subunit, it contacts several helices of the 16S rRNA. In the 70S ribosome it contacts the 23S rRNA (bridge B1a) and protein L5 of the 50S subunit (bridge B1b), connecting the 2 subunits; these bridges are implicated in subunit movement. Contacts the tRNAs in the A and P-sites. The chain is Small ribosomal subunit protein uS13 from Methylorubrum populi (strain ATCC BAA-705 / NCIMB 13946 / BJ001) (Methylobacterium populi).